We begin with the raw amino-acid sequence, 208 residues long: Small ribosomal subunit protein eS1 (208 aa).

It belongs to the eukaryotic ribosomal protein eS1 family.

The chain is Small ribosomal subunit protein eS1 from Saccharolobus solfataricus (strain ATCC 35092 / DSM 1617 / JCM 11322 / P2) (Sulfolobus solfataricus).